The following is a 276-amino-acid chain: NADPH-dependent 7-cyano-7-deazaguanine reductase (276 aa).

83–85 is a binding site for substrate; the sequence is VES. Position 85-86 (85-86) interacts with NADPH; the sequence is SK. The active-site Thioimide intermediate is the Cys-184. Asp-191 serves as the catalytic Proton donor. 223–224 is a binding site for substrate; sequence HE. Position 252–253 (252–253) interacts with NADPH; it reads RG.

This sequence belongs to the GTP cyclohydrolase I family. QueF type 2 subfamily. As to quaternary structure, homodimer.

Its subcellular location is the cytoplasm. It carries out the reaction 7-aminomethyl-7-carbaguanine + 2 NADP(+) = 7-cyano-7-deazaguanine + 2 NADPH + 3 H(+). The protein operates within tRNA modification; tRNA-queuosine biosynthesis. Functionally, catalyzes the NADPH-dependent reduction of 7-cyano-7-deazaguanine (preQ0) to 7-aminomethyl-7-deazaguanine (preQ1). This is NADPH-dependent 7-cyano-7-deazaguanine reductase from Azotobacter vinelandii (strain DJ / ATCC BAA-1303).